The primary structure comprises 664 residues: Alpha-1,4-glucan:maltose-1-phosphate maltosyltransferase (664 aa).

Positions 261, 321, and 356 each coordinate alpha-maltose 1-phosphate. Catalysis depends on D393, which acts as the Nucleophile. N394 contributes to the alpha-maltose 1-phosphate binding site. Catalysis depends on E422, which acts as the Proton donor. 533-534 (KY) contributes to the alpha-maltose 1-phosphate binding site.

It belongs to the glycosyl hydrolase 13 family. GlgE subfamily. As to quaternary structure, homodimer.

It carries out the reaction alpha-maltose 1-phosphate + [(1-&gt;4)-alpha-D-glucosyl](n) = [(1-&gt;4)-alpha-D-glucosyl](n+2) + phosphate. Its function is as follows. Maltosyltransferase that uses maltose 1-phosphate (M1P) as the sugar donor to elongate linear or branched alpha-(1-&gt;4)-glucans. Is involved in a branched alpha-glucan biosynthetic pathway from trehalose, together with TreS, Mak and GlgB. In Pseudomonas aeruginosa (strain ATCC 15692 / DSM 22644 / CIP 104116 / JCM 14847 / LMG 12228 / 1C / PRS 101 / PAO1), this protein is Alpha-1,4-glucan:maltose-1-phosphate maltosyltransferase.